The primary structure comprises 129 residues: Serum amyloid A-4 protein (129 aa).

The N-terminal stretch at M1 to G18 is a signal peptide. The span at A107–R121 shows a compositional bias: basic and acidic residues. A disordered region spans residues A107–Y129.

This sequence belongs to the SAA family. Apolipoprotein of the HDL complex.

It is found in the secreted. In terms of biological role, major acute phase reactant. The protein is Serum amyloid A-4 protein of Bos taurus (Bovine).